The chain runs to 353 residues: Chemerin-like receptor 2 (353 aa).

Residues 1 to 41 (MEVSREMLFEELDNYSYALEYYSQEPDAEENVYPGIVHWIS) lie on the Extracellular side of the membrane. A glycan (N-linked (GlcNAc...) asparagine) is linked at N14. The chain crosses the membrane as a helical span at residues 42–62 (LLLYALAFVLGIPGNAIVIWF). The Cytoplasmic segment spans residues 63 to 73 (MGFKWKKTVTT). The helical transmembrane segment at 74–94 (LWFLNLAIADFVFVLFLPLYI) threads the bilayer. The Extracellular portion of the chain corresponds to 95–112 (SYVALSFHWPFGRWLCKL). C110 and C187 are joined by a disulfide. The helical transmembrane segment at 113-133 (NSFIAQLNMFSSVFFLTVISL) threads the bilayer. Topologically, residues 134–154 (DRYIHLIHPGLSHPHRTLKNS) are cytoplasmic. Residues 155 to 175 (LLVVLFVWLLASLLGGPTLYF) traverse the membrane as a helical segment. Residues 176–210 (RDTVEVNNRIICYNNFQEYELTLMRHHVLTWVKFL) lie on the Extracellular side of the membrane. A helical transmembrane segment spans residues 211–231 (FGYLLPLLTMSSCYLCLIFKT). Residues 232–247 (KKQNILISSKHLWMIL) are Cytoplasmic-facing. Residues 248 to 268 (SVVIAFMVCWTPFHLFSIWEL) traverse the membrane as a helical segment. Residues 269–286 (SIHHNSSFQNVLQGGIPL) are Extracellular-facing. The chain crosses the membrane as a helical span at residues 287–307 (STGLAFLNSCLNPILYVLISK). At 308 to 353 (KFQARFRASVAEVLKRSLWEASCSGTVSEQLRSAETKSLSLLETAQ) the chain is on the cytoplasmic side.

The protein belongs to the chemokine-like receptor (CMKLR) family.

It is found in the cell membrane. In terms of biological role, receptor for chemoattractant adipokine chemerin/RARRES2 suggesting a role for this receptor in the regulation of inflammation and energy homesotasis. Signals mainly via beta-arrestin pathway. Binding of RARRES2 activates weakly G proteins, calcium mobilization and MAPK1/MAPK3 (ERK1/2) phosphorylation too. Acts also as a receptor for TAFA1, mediates its effects on neuronal stem-cell proliferation and differentiation via the activation of ROCK/ERK and ROCK/STAT3 signaling pathway. In Rattus norvegicus (Rat), this protein is Chemerin-like receptor 2 (Cmklr2).